Here is a 366-residue protein sequence, read N- to C-terminus: MAIISSKKQPPEPNGQPNKRPESAPSVPKEKVLQPEAAIDEQGKQEESIRPQRFADYIGQKDLKDVLDIAIKAAKSRGEVLDHLLLYGPPGLGKTTMAMILASEMGVNYKITSAPALERPRDIVGLLVNLKPGDILFIDEIHRLSRMTEEILYPAMEDYRLDITVGKGSSARIRSIPLSKFTLVGATTRVGALTSPLRDRFGLIQKLRFYEVDELSQIVLRSAQLLQTQVTDDGATEIARRSRGTPRIANRLLKRVRDYAQVKSCAEVSQNIAAEALQLFQVDPCGLDWTDRRMLSVIIEQFNGGPVGLETIAAATGEDTQTIEEVYEPYLMQIGYLSRTPRGRTATKAAYKHMGFTPPNEQLSLL.

The disordered stretch occupies residues 1 to 49 (MAIISSKKQPPEPNGQPNKRPESAPSVPKEKVLQPEAAIDEQGKQEESI). The tract at residues 13–210 (PNGQPNKRPE…FGLIQKLRFY (198 aa)) is large ATPase domain (RuvB-L). Residues Ile-49, Arg-50, Gly-91, Lys-94, Thr-95, Thr-96, 157 to 159 (EDY), Arg-200, Tyr-210, and Arg-247 contribute to the ATP site. Thr-95 contacts Mg(2+). The small ATPAse domain (RuvB-S) stretch occupies residues 211 to 281 (EVDELSQIVL…IAAEALQLFQ (71 aa)). The head domain (RuvB-H) stretch occupies residues 284–366 (PCGLDWTDRR…TPPNEQLSLL (83 aa)). DNA contacts are provided by Arg-339 and Arg-344.

This sequence belongs to the RuvB family. As to quaternary structure, homohexamer. Forms an RuvA(8)-RuvB(12)-Holliday junction (HJ) complex. HJ DNA is sandwiched between 2 RuvA tetramers; dsDNA enters through RuvA and exits via RuvB. An RuvB hexamer assembles on each DNA strand where it exits the tetramer. Each RuvB hexamer is contacted by two RuvA subunits (via domain III) on 2 adjacent RuvB subunits; this complex drives branch migration. In the full resolvosome a probable DNA-RuvA(4)-RuvB(12)-RuvC(2) complex forms which resolves the HJ.

Its subcellular location is the cytoplasm. It catalyses the reaction ATP + H2O = ADP + phosphate + H(+). The RuvA-RuvB-RuvC complex processes Holliday junction (HJ) DNA during genetic recombination and DNA repair, while the RuvA-RuvB complex plays an important role in the rescue of blocked DNA replication forks via replication fork reversal (RFR). RuvA specifically binds to HJ cruciform DNA, conferring on it an open structure. The RuvB hexamer acts as an ATP-dependent pump, pulling dsDNA into and through the RuvAB complex. RuvB forms 2 homohexamers on either side of HJ DNA bound by 1 or 2 RuvA tetramers; 4 subunits per hexamer contact DNA at a time. Coordinated motions by a converter formed by DNA-disengaged RuvB subunits stimulates ATP hydrolysis and nucleotide exchange. Immobilization of the converter enables RuvB to convert the ATP-contained energy into a lever motion, pulling 2 nucleotides of DNA out of the RuvA tetramer per ATP hydrolyzed, thus driving DNA branch migration. The RuvB motors rotate together with the DNA substrate, which together with the progressing nucleotide cycle form the mechanistic basis for DNA recombination by continuous HJ branch migration. Branch migration allows RuvC to scan DNA until it finds its consensus sequence, where it cleaves and resolves cruciform DNA. The chain is Holliday junction branch migration complex subunit RuvB from Nostoc sp. (strain PCC 7120 / SAG 25.82 / UTEX 2576).